A 341-amino-acid chain; its full sequence is Holliday junction branch migration complex subunit RuvB (341 aa).

Residues 3 to 184 (DDFDIRDARM…FGINMHLEYY (182 aa)) form a large ATPase domain (RuvB-L) region. ATP-binding positions include leucine 23, arginine 24, glycine 65, lysine 68, threonine 69, threonine 70, 131–133 (EDY), arginine 174, tyrosine 184, and arginine 221. Threonine 69 provides a ligand contact to Mg(2+). The segment at 185–255 (DMETLTKIVL…IACFSLEALN (71 aa)) is small ATPAse domain (RuvB-S). Residues 258-341 (RYGLDQIDNK…RVGEQGFLFD (84 aa)) are head domain (RuvB-H). 2 residues coordinate DNA: arginine 313 and arginine 318.

Belongs to the RuvB family. In terms of assembly, homohexamer. Forms an RuvA(8)-RuvB(12)-Holliday junction (HJ) complex. HJ DNA is sandwiched between 2 RuvA tetramers; dsDNA enters through RuvA and exits via RuvB. An RuvB hexamer assembles on each DNA strand where it exits the tetramer. Each RuvB hexamer is contacted by two RuvA subunits (via domain III) on 2 adjacent RuvB subunits; this complex drives branch migration. In the full resolvosome a probable DNA-RuvA(4)-RuvB(12)-RuvC(2) complex forms which resolves the HJ.

The protein resides in the cytoplasm. It catalyses the reaction ATP + H2O = ADP + phosphate + H(+). Functionally, the RuvA-RuvB-RuvC complex processes Holliday junction (HJ) DNA during genetic recombination and DNA repair, while the RuvA-RuvB complex plays an important role in the rescue of blocked DNA replication forks via replication fork reversal (RFR). RuvA specifically binds to HJ cruciform DNA, conferring on it an open structure. The RuvB hexamer acts as an ATP-dependent pump, pulling dsDNA into and through the RuvAB complex. RuvB forms 2 homohexamers on either side of HJ DNA bound by 1 or 2 RuvA tetramers; 4 subunits per hexamer contact DNA at a time. Coordinated motions by a converter formed by DNA-disengaged RuvB subunits stimulates ATP hydrolysis and nucleotide exchange. Immobilization of the converter enables RuvB to convert the ATP-contained energy into a lever motion, pulling 2 nucleotides of DNA out of the RuvA tetramer per ATP hydrolyzed, thus driving DNA branch migration. The RuvB motors rotate together with the DNA substrate, which together with the progressing nucleotide cycle form the mechanistic basis for DNA recombination by continuous HJ branch migration. Branch migration allows RuvC to scan DNA until it finds its consensus sequence, where it cleaves and resolves cruciform DNA. This Parabacteroides distasonis (strain ATCC 8503 / DSM 20701 / CIP 104284 / JCM 5825 / NCTC 11152) protein is Holliday junction branch migration complex subunit RuvB.